A 417-amino-acid chain; its full sequence is Sterile alpha motif domain-containing protein 14 (417 aa).

Disordered regions lie at residues 37 to 299 and 388 to 417; these read LLAK…WQEA and AAAE…AKKS. Over residues 40–49 the composition is skewed to basic residues; sequence KGRRHRPSRS. 2 positions are modified to phosphoserine: Ser84 and Ser108. A compositionally biased stretch (low complexity) spans 135-153; that stretch reads AAASCSPPRSAPSSDSSPS. Residues 160–173 show a composition bias toward basic and acidic residues; it reads RAEPHSEDDSRDAS. 2 positions are modified to phosphoserine: Ser173 and Ser179. Low complexity-rich tracts occupy residues 244–260 and 276–295; these read SGKG…PTCS and STLS…PSGP. Ser279 carries the phosphoserine modification. Position 283 is a phosphothreonine (Thr283). One can recognise an SAM domain in the interval 326–389; that stretch reads WTSQQVGQWL…KRKLKEMAAA (64 aa). The stretch at 377–417 forms a coiled coil; that stretch reads ALVKRKLKEMAAAAEKERKAQEKAARQREKLRRREQEAKKS. Positions 390–417 are enriched in basic and acidic residues; that stretch reads AEKERKAQEKAARQREKLRRREQEAKKS.

This Homo sapiens (Human) protein is Sterile alpha motif domain-containing protein 14 (SAMD14).